The sequence spans 84 residues: Sulfur carrier protein TusA (84 aa).

The active-site Cysteine persulfide intermediate is cysteine 19.

Belongs to the sulfur carrier protein TusA family. In terms of assembly, interacts with IscS.

The protein localises to the cytoplasm. The protein operates within tRNA modification. Functionally, sulfur carrier protein involved in sulfur trafficking in the cell. Part of a sulfur-relay system required for 2-thiolation during synthesis of 2-thiouridine of the modified wobble base 5-methylaminomethyl-2-thiouridine (mnm(5)s(2)U) in tRNA. Interacts with IscS and stimulates its cysteine desulfurase activity. Accepts an activated sulfur from IscS, which is then transferred to TusD, and thus determines the direction of sulfur flow from IscS to 2-thiouridine formation. Also appears to be involved in sulfur transfer for the biosynthesis of molybdopterin. The chain is Sulfur carrier protein TusA from Yersinia pseudotuberculosis serotype O:1b (strain IP 31758).